The chain runs to 187 residues: Anterior gradient protein 1 (187 aa).

A signal peptide spans 1–20 (MQTGLSLVCLVLLCSALGEA).

The protein belongs to the AGR family.

It localises to the secreted. In terms of biological role, probably involved in cement gland formation. The protein is Anterior gradient protein 1 (ag1) of Xenopus tropicalis (Western clawed frog).